Reading from the N-terminus, the 323-residue chain is Cyclin-H (323 aa).

The residue at position 5 (Ser-5) is a Phosphoserine; by CDK8. Ser-132 bears the Phosphoserine mark. A disordered region spans residues 297-323; that stretch reads YEDDDYVSKKSKHEEEEWTDDDLVESL. Basic and acidic residues predominate over residues 302–311; the sequence is YVSKKSKHEE. Position 304 is a phosphoserine; by CDK8 (Ser-304). Acidic residues predominate over residues 312 to 323; the sequence is EEWTDDDLVESL. Thr-315 bears the Phosphothreonine mark. Residue Ser-322 is modified to Phosphoserine.

The protein belongs to the cyclin family. Cyclin C subfamily. As to quaternary structure, associates primarily with CDK7 and MAT1 to form the CAK complex. CAK can further associate with the core-TFIIH to form the TFIIH basal transcription factor.

It is found in the nucleus. In terms of biological role, regulates CDK7, the catalytic subunit of the CDK-activating kinase (CAK) enzymatic complex. CAK activates the cyclin-associated kinases CDK1, CDK2, CDK4 and CDK6 by threonine phosphorylation. CAK complexed to the core-TFIIH basal transcription factor activates RNA polymerase II by serine phosphorylation of the repetitive C-terminal domain (CTD) of its large subunit (POLR2A), allowing its escape from the promoter and elongation of the transcripts. Involved in cell cycle control and in RNA transcription by RNA polymerase II. Its expression and activity are constant throughout the cell cycle. In Homo sapiens (Human), this protein is Cyclin-H (CCNH).